The following is an 895-amino-acid chain: Probable aminodeoxychorismate synthase, chloroplastic (895 aa).

Residues 1–45 (MAALRLPTPPPPRAPAPWLHSSHRRRVAAPRGAGGGGGGGGAVPP) are disordered. The N-terminal 48 residues, 1–48 (MAALRLPTPPPPRAPAPWLHSSHRRRVAAPRGAGGGGGGGGAVPPPPV), are a transit peptide targeting the chloroplast. Residues 32–42 (GAGGGGGGGGA) are compositionally biased toward gly residues. Residues 49-307 (RTLLIDNYDS…KKITTDFGLQ (259 aa)) enclose the Glutamine amidotransferase type-1 domain. Cysteine 135 (nucleophile) is an active-site residue. Catalysis depends on residues histidine 281 and glutamate 283. A PABB component region spans residues 387–875 (IFSVLFGHHS…KAKAPTKVVE (489 aa)).

This sequence in the C-terminal section; belongs to the anthranilate synthase component I family.

The protein resides in the plastid. The protein localises to the chloroplast. The catalysed reaction is chorismate + L-glutamine = 4-amino-4-deoxychorismate + L-glutamate. The protein operates within cofactor biosynthesis; tetrahydrofolate biosynthesis; 4-aminobenzoate from chorismate: step 1/2. It participates in antibiotic biosynthesis; candicidin biosynthesis. Bifunctional enzyme that catalyzes the biosynthesis of 4-amino-4-deoxychorismate (ADC) from chorismate and glutamine. In the first step, a glutamine amidotransferase generates ammonia that is channelled between the binding sites of glutamine and chorismate and used along with chorismate in the second step, catalyzed by aminodeoxychorismate synthase, to produce ADC. Required for the synthesis of 4-aminobenzoate (PABA), an important component in tetrahydrofolate biosynthesis. Does not possess ADC lyase activity. This Oryza sativa subsp. japonica (Rice) protein is Probable aminodeoxychorismate synthase, chloroplastic (ADCS).